We begin with the raw amino-acid sequence, 211 residues long: Superoxide dismutase [Mn] (211 aa).

His27, His82, Asp165, and His169 together coordinate Mn(2+).

This sequence belongs to the iron/manganese superoxide dismutase family. In terms of assembly, homodimer. It depends on Mn(2+) as a cofactor.

It carries out the reaction 2 superoxide + 2 H(+) = H2O2 + O2. Destroys superoxide anion radicals which are normally produced within the cells and which are toxic to biological systems. The chain is Superoxide dismutase [Mn] (sodA) from Bordetella pertussis (strain Tohama I / ATCC BAA-589 / NCTC 13251).